The chain runs to 176 residues: Tubulin polymerization-promoting protein family member 3 (176 aa).

A2 is subject to N-acetylalanine. Positions 132–152 (TGSHKERFDESGKGKGIAGRQ) are disordered. Residues 134-144 (SHKERFDESGK) show a composition bias toward basic and acidic residues.

Belongs to the TPPP family. As to expression, expressed in endometrium during the mid-secretory phase (LH + 7) (at protein level).

The protein resides in the cytoplasm. It localises to the cytoskeleton. Functionally, regulator of microtubule dynamic that has microtubule bundling activity. Required for embryo implantation; possibly by regulating beta-catenin. Also required for decidualization via regulation of beta-catenin. This is Tubulin polymerization-promoting protein family member 3 from Homo sapiens (Human).